The chain runs to 570 residues: Sulfite reductase [NADPH] hemoprotein beta-component (570 aa).

The [4Fe-4S] cluster site is built by Cys-434, Cys-440, Cys-479, and Cys-483. Cys-483 serves as a coordination point for siroheme.

This sequence belongs to the nitrite and sulfite reductase 4Fe-4S domain family. In terms of assembly, alpha(8)-beta(8). The alpha component is a flavoprotein, the beta component is a hemoprotein. Siroheme is required as a cofactor. The cofactor is [4Fe-4S] cluster.

It catalyses the reaction hydrogen sulfide + 3 NADP(+) + 3 H2O = sulfite + 3 NADPH + 4 H(+). It participates in sulfur metabolism; hydrogen sulfide biosynthesis; hydrogen sulfide from sulfite (NADPH route): step 1/1. Component of the sulfite reductase complex that catalyzes the 6-electron reduction of sulfite to sulfide. This is one of several activities required for the biosynthesis of L-cysteine from sulfate. This is Sulfite reductase [NADPH] hemoprotein beta-component from Shigella flexneri serotype 5b (strain 8401).